The chain runs to 860 residues: MGVSGSKGQKLFVSVLQRLLSERGLHVKESSAIEFYQFLIKVSPWFPEEGGLNLQDWKRVGREMKRYAAEHGTDSIPKQAYPIWLQLREILTEQSDLVLLSAEAKSVTEEELEEGLTGLLSTSSQEKTYGTRGTAYAEIDTEVDKLSEHIYDEPYEEKEKADKNEEKDHVRKIKKVVQRKENSEGKRKEKDSKAFLATDWNDDDLSPEDWDDLEEQAAHYHDDDELILPVKRKVVKKKPQALRRKPLPPVGFAGAMAEAREKGDLTFTFPVVFMGESDEDDTPVWEPLPLKTLKELQSAVRTMGPSAPYTLQVVDMVASQWLTPSDWHQTARATLSPGDYVLWRTEYEEKSKEMVQKAAGKRKGKVSLDMLLGTGQFLSPSSQIKLSKDVLKDVTTNAVLAWRAIPPPGVKKTVLAGLKQGNEESYETFISRLEEAVYRMMPRGEGSDILIKQLAWENANSLCQDLIRPIRKTGTIQDYIRACLDASPAVVQGMAYAAAMRGQKYSTFVKQTYGGGKGGQGAEGPVCFSCGKTGHIRKDCKDEKGSKRAPPGLCPRCKKGYHWKSECKSKFDKDGNPLPPLETNAENSKNLVKGQSPSPAQKGDGVKGSGLNPEAPPFTIHDLPRGTPGSAGLDLSSQKDLILSLEDGVSLVPTLVKGTLPEGTTGLIIGRSSNYKKGLEVLPGVIDSDFQGEIKVMVKAAKNAVIIHKGERIAQLLLLPYLKLPNPVIKEERGSEGFGSTSHVHWVQEISDSRPMLHIYLNGRRFLGLLDTGADKTCIAGRDWPANWPIHQTESSLQGLGMACGVARSSQPLRWQHEDKSGIIHPFVIPTLPFTLWGRDIMKDIKVRLMTDSPDDSQDL.

Residue G2 is the site of N-myristoyl glycine; by host attachment. 2 stretches are compositionally biased toward basic and acidic residues: residues 151 to 169 (YDEPYEEKEKADKNEEKDH) and 178 to 191 (QRKENSEGKRKEKD). Positions 151–191 (YDEPYEEKEKADKNEEKDHVRKIKKVVQRKENSEGKRKEKD) are disordered. Residues 305-308 (PSAP) carry the PTAP/PSAP motif motif. 2 CCHC-type zinc fingers span residues 525 to 542 (PVCFSCGKTGHIRKDCKD) and 552 to 569 (GLCPRCKKGYHWKSECKS). The disordered stretch occupies residues 572–631 (DKDGNPLPPLETNAENSKNLVKGQSPSPAQKGDGVKGSGLNPEAPPFTIHDLPRGTPGSA). Polar residues predominate over residues 584–599 (NAENSKNLVKGQSPSP). One can recognise a Peptidase A2 domain in the interval 766-841 (FLGLLDTGAD…LPFTLWGRDI (76 aa)). Residue D771 is the Protease; shared with dimeric partner of the active site.

Homodimer; when myristoylated. In terms of assembly, homodimer. As to quaternary structure, NC-dUTPase is a homotrimer. In terms of processing, released by autocatalytic processing. Post-translationally, myristoylated. Myristoylation of the matrix (MA) domain mediates the transport and binding of Gag polyproteins to the host plasma membrane and is required for the assembly of viral particles. Specific enzymatic cleavages in vivo yield mature proteins.

Its subcellular location is the virion. It catalyses the reaction dUTP + H2O = dUMP + diphosphate + H(+). Inhibited by pepstatin A. In terms of biological role, matrix protein. Functionally, nucleocapsid protein p14: Binds strongly to viral nucleic acids and promote their aggregation. Also destabilizes the nucleic acids duplexes via highly structured zinc-binding motifs. Its function is as follows. Capsid protein. The aspartyl protease mediates proteolytic cleavages of Gag and Gag-Pol polyproteins during or shortly after the release of the virion from the plasma membrane. Cleavages take place as an ordered, step-wise cascade to yield mature proteins. This process is called maturation. Displays maximal activity during the budding process just prior to particle release from the cell. The sequence is that of Gag-Pro polyprotein (gag-pro) from Mouse mammary tumor virus (strain BR6) (MMTV).